The chain runs to 316 residues: Ribosomal RNA small subunit methyltransferase H (316 aa).

S-adenosyl-L-methionine-binding positions include 35-37, Asp-55, Phe-84, Asp-105, and Gln-112; that span reads AGH.

This sequence belongs to the methyltransferase superfamily. RsmH family.

The protein resides in the cytoplasm. The enzyme catalyses cytidine(1402) in 16S rRNA + S-adenosyl-L-methionine = N(4)-methylcytidine(1402) in 16S rRNA + S-adenosyl-L-homocysteine + H(+). In terms of biological role, specifically methylates the N4 position of cytidine in position 1402 (C1402) of 16S rRNA. The protein is Ribosomal RNA small subunit methyltransferase H of Streptococcus pneumoniae (strain Taiwan19F-14).